The primary structure comprises 378 residues: D-alanine--D-alanine ligase (378 aa).

An ATP-grasp domain is found at 149–374; it reads KVLLRAAGIP…FRTVVTDLIE (226 aa). 189-247 is an ATP binding site; the sequence is EAGLQYPLFVKPSRAGSSFGVTKVEQIGDAAALAAAVFEASRHDWRVLVEQGIDAREIE. Asp-328, Glu-341, and Asn-343 together coordinate Mg(2+).

Belongs to the D-alanine--D-alanine ligase family. Mg(2+) is required as a cofactor. Requires Mn(2+) as cofactor.

It localises to the cytoplasm. The enzyme catalyses 2 D-alanine + ATP = D-alanyl-D-alanine + ADP + phosphate + H(+). Its pathway is cell wall biogenesis; peptidoglycan biosynthesis. Functionally, cell wall formation. The sequence is that of D-alanine--D-alanine ligase from Bifidobacterium animalis subsp. lactis (strain AD011).